A 258-amino-acid chain; its full sequence is ATP synthase subunit a (258 aa).

6 helical membrane-spanning segments follow: residues 30–50, 85–105, 122–142, 151–171, 198–218, and 230–250; these read SSYF…VAMS, FFPF…LGMF, LIVT…YGVF, LFVP…IEII, FAGF…LAGI, and LEFL…CIYL.

Belongs to the ATPase A chain family. F-type ATPases have 2 components, CF(1) - the catalytic core - and CF(0) - the membrane proton channel. CF(1) has five subunits: alpha(3), beta(3), gamma(1), delta(1), epsilon(1). CF(0) has three main subunits: a(1), b(2) and c(9-12). The alpha and beta chains form an alternating ring which encloses part of the gamma chain. CF(1) is attached to CF(0) by a central stalk formed by the gamma and epsilon chains, while a peripheral stalk is formed by the delta and b chains.

It localises to the cell inner membrane. Key component of the proton channel; it plays a direct role in the translocation of protons across the membrane. The sequence is that of ATP synthase subunit a from Maricaulis maris (strain MCS10) (Caulobacter maris).